Reading from the N-terminus, the 591-residue chain is ATPase family AAA domain-containing protein 3A (591 aa).

A disordered region spans residues 1–52 (MSWLFGIKGPKGEGTGPPLPLPPAQPGAEGGGDRGAGDRPSPKDKWSNFDPT). Serine 2 carries the post-translational modification N-acetylserine. Residues 2-49 (SWLFGIKGPKGEGTGPPLPLPPAQPGAEGGGDRGAGDRPSPKDKWSNF) form a required for interaction with the inner surface of the mitochondrial outer membrane region. The Mitochondrial intermembrane portion of the chain corresponds to 2–245 (SWLFGIKGPK…FRAFVTDWDK (244 aa)). The span at 31 to 47 (GGDRGAGDRPSPKDKWS) shows a compositional bias: basic and acidic residues. A coiled-coil region spans residues 55–216 (ERAAKAAREL…REQIRLKAAE (162 aa)). Residues 246–263 (VTATVAGLTLLAVGVYSA) form a helical membrane-spanning segment. The Mitochondrial matrix portion of the chain corresponds to 264–586 (KNATSVAGRY…DSQTNKPPHP (323 aa)). The S100B-binding stretch occupies residues 289–304 (RISVLEALRHPIQVSR). 351 to 358 (GPPGTGKT) provides a ligand contact to ATP. Position 490 is an N6-acetyllysine; alternate (lysine 490). An N6-succinyllysine; alternate modification is found at lysine 490. N6-acetyllysine occurs at positions 494 and 512. The segment at 572–591 (KVERPDSQTNKPPHPSLLSC) is disordered.

It belongs to the AAA ATPase family. Can form homooligomers. Homodimer formation at the N-terminus may be regulated by ATP and is required for the interaction with the inner surface of the mitochondrial outer membrane and correct mitochondrial homeostasis. Interacts with components of the mitochondrial ribosome and with other proteins involved in mitochondrial RNA metabolism. May also interact with protein involved in lipid metabolism, including STARD9. May interact with FAM210A. Interacts with GADD45GIP1. Interacts with S100B in a Ca(+2)- and Zn(+2)-dependent manner; this interaction probably occurs in the cytosol prior to mitochondrial targeting. S100B could assist ATAD3A cytoplasmic processing, preventing aggregation and favoring mitochondrial localization. Interacts with HSP60/HSPD1. Interacts with CLPB. Interacts with EIF2AK3/PERK; ATAD3A and EIF2S1/eIF-2-alpha occupy a common binding site within the cytoplasmic loop of EIF2AK3/PERK, leading to prevent EIF2AK3/PERK association with its substrate EIF2S1/eIF-2-alpha. In terms of tissue distribution, expressed in heart, spleen, kidney, liver and at smaller levels, in lung and muscle (at protein level).

The protein localises to the mitochondrion inner membrane. It is found in the mitochondrion matrix. Its subcellular location is the mitochondrion nucleoid. It carries out the reaction ATP + H2O = ADP + phosphate + H(+). Essential for mitochondrial network organization, mitochondrial metabolism and cell growth at organism and cellular level. May play an important role in mitochondrial protein synthesis. May also participate in mitochondrial DNA replication. May bind to mitochondrial DNA D-loops and contribute to nucleoid stability. Required for enhanced channeling of cholesterol for hormone-dependent steroidogenesis. Involved in mitochondrial-mediated antiviral innate immunity. Required to protect mitochondria from the PERK-mediated unfolded protein response: specifically inhibits the activity of EIF2AK3/PERK at mitochondria-endoplasmic reticulum contact sites, thereby providing a safe haven for mitochondrial protein translation during endoplasmic reticulum stress. Ability to inhibit EIF2AK3/PERK is independent of its ATPase activity. Also involved in the mitochondrial DNA damage response by promoting signaling between damaged genomes and the mitochondrial membrane, leading to activation of the integrated stress response (ISR). In Mus musculus (Mouse), this protein is ATPase family AAA domain-containing protein 3A (Atad3a).